The chain runs to 336 residues: Poly(A) RNA polymerase cid12 (336 aa).

Mg(2+) contacts are provided by D77 and D79. The PAP-associated domain occupies 209-263 (ALLQKFFYFWGVEWTYELFVLRPLTGQIVPKLQKGWLNEVQPNLLSIEDPIDRNN). Phosphoserine is present on S325. A Phosphothreonine modification is found at T327. S329 carries the phosphoserine modification.

The protein belongs to the DNA polymerase type-B-like family. Cid12, hrr1 and rdp1 interact forming the RNA-directed RNA polymerase complex (RDRC). The RDRC complex interacts with the RITS complex via interaction between ago1 and hrr1. Clr4 has a role in mediating this interaction. Mg(2+) serves as cofactor. Mn(2+) is required as a cofactor.

The protein resides in the cytoplasm. Its subcellular location is the nucleus. The enzyme catalyses RNA(n) + ATP = RNA(n)-3'-adenine ribonucleotide + diphosphate. Has a role in the RNA interference (RNAi) pathway which is important for heterochromatin formation and accurate chromosome segregation. A member of the RNA-directed RNA polymerase complex (RDRC) which is involved in the generation of small interfering RNAs (siRNAs) and mediate their association with the RNA-induced transcriptional silencing (RITS) complex. RITS acts as a priming complex for dsRNA synthesis at the site of non-coding centromeric RNA. The chain is Poly(A) RNA polymerase cid12 (cid12) from Schizosaccharomyces pombe (strain 972 / ATCC 24843) (Fission yeast).